Here is a 121-residue protein sequence, read N- to C-terminus: Small ribosomal subunit protein uS13 (121 aa).

The tract at residues 94-121 is disordered; that stretch reads RGLPVRGQSTKNNARTRKGPKRTVGAKR. The span at 107–121 shows a compositional bias: basic residues; it reads ARTRKGPKRTVGAKR.

It belongs to the universal ribosomal protein uS13 family. Part of the 30S ribosomal subunit. Forms a loose heterodimer with protein S19. Forms two bridges to the 50S subunit in the 70S ribosome.

Located at the top of the head of the 30S subunit, it contacts several helices of the 16S rRNA. In the 70S ribosome it contacts the 23S rRNA (bridge B1a) and protein L5 of the 50S subunit (bridge B1b), connecting the 2 subunits; these bridges are implicated in subunit movement. Contacts the tRNAs in the A and P-sites. The chain is Small ribosomal subunit protein uS13 from Natranaerobius thermophilus (strain ATCC BAA-1301 / DSM 18059 / JW/NM-WN-LF).